The following is a 176-amino-acid chain: Crossover junction endodeoxyribonuclease RuvC (176 aa).

Catalysis depends on residues Asp7, Glu68, and Asp141. Asp7, Glu68, and Asp141 together coordinate Mg(2+).

Belongs to the RuvC family. In terms of assembly, homodimer which binds Holliday junction (HJ) DNA. The HJ becomes 2-fold symmetrical on binding to RuvC with unstacked arms; it has a different conformation from HJ DNA in complex with RuvA. In the full resolvosome a probable DNA-RuvA(4)-RuvB(12)-RuvC(2) complex forms which resolves the HJ. Mg(2+) is required as a cofactor.

It is found in the cytoplasm. It carries out the reaction Endonucleolytic cleavage at a junction such as a reciprocal single-stranded crossover between two homologous DNA duplexes (Holliday junction).. The RuvA-RuvB-RuvC complex processes Holliday junction (HJ) DNA during genetic recombination and DNA repair. Endonuclease that resolves HJ intermediates. Cleaves cruciform DNA by making single-stranded nicks across the HJ at symmetrical positions within the homologous arms, yielding a 5'-phosphate and a 3'-hydroxyl group; requires a central core of homology in the junction. The consensus cleavage sequence is 5'-(A/T)TT(C/G)-3'. Cleavage occurs on the 3'-side of the TT dinucleotide at the point of strand exchange. HJ branch migration catalyzed by RuvA-RuvB allows RuvC to scan DNA until it finds its consensus sequence, where it cleaves and resolves the cruciform DNA. The sequence is that of Crossover junction endodeoxyribonuclease RuvC from Streptomyces avermitilis (strain ATCC 31267 / DSM 46492 / JCM 5070 / NBRC 14893 / NCIMB 12804 / NRRL 8165 / MA-4680).